We begin with the raw amino-acid sequence, 356 residues long: MKKHNFNAGPSILPREVIEKTAQAVLDFNGSGLSIMEISHRAKDFQPVVDEAVALFKELLNIPEGYSVLFLGGGASLEFCMIPFNFLEKKAAYLNTGVWAKKAMKEAKAFGEVVEVASSAEATYTYIPKDYTVPADADYFHVTTNNTIYGTELHEDLDSPVPMIADMSSDIFSRPIDVSKYICIYGGAQKNLAPAGVTFVIVKNDAVGKVSRYIPTMLNYQTHIDGGSMFNTPPVLPIYAALQTLRWIKANGGVAEMQKRAKEKADMLYAEIDRNKMFRGTVTDKADRSYMNICFVMNDEYKDLEADFLKFATEKGMVGIKGHRSVGGFRASCYNAMPKESVQALIDCMQEFEKLH.

Arg-41 is a binding site for L-glutamate. Pyridoxal 5'-phosphate contacts are provided by residues 75–76, Trp-99, Thr-147, Asp-166, and Gln-189; that span reads AS. The residue at position 190 (Lys-190) is an N6-(pyridoxal phosphate)lysine. Pyridoxal 5'-phosphate is bound at residue 231–232; that stretch reads NT.

Belongs to the class-V pyridoxal-phosphate-dependent aminotransferase family. SerC subfamily. In terms of assembly, homodimer. It depends on pyridoxal 5'-phosphate as a cofactor.

Its subcellular location is the cytoplasm. The catalysed reaction is O-phospho-L-serine + 2-oxoglutarate = 3-phosphooxypyruvate + L-glutamate. It carries out the reaction 4-(phosphooxy)-L-threonine + 2-oxoglutarate = (R)-3-hydroxy-2-oxo-4-phosphooxybutanoate + L-glutamate. The protein operates within amino-acid biosynthesis; L-serine biosynthesis; L-serine from 3-phospho-D-glycerate: step 2/3. It participates in cofactor biosynthesis; pyridoxine 5'-phosphate biosynthesis; pyridoxine 5'-phosphate from D-erythrose 4-phosphate: step 3/5. In terms of biological role, catalyzes the reversible conversion of 3-phosphohydroxypyruvate to phosphoserine and of 3-hydroxy-2-oxo-4-phosphonooxybutanoate to phosphohydroxythreonine. In Phocaeicola vulgatus (strain ATCC 8482 / DSM 1447 / JCM 5826 / CCUG 4940 / NBRC 14291 / NCTC 11154) (Bacteroides vulgatus), this protein is Phosphoserine aminotransferase.